Here is a 170-residue protein sequence, read N- to C-terminus: Transmembrane protein 217B (170 aa).

An N-terminal signal peptide occupies residues 1–21 (MNVRMFSLMVGIFSVLNTTQF). Residues 22-58 (FIFDLNQKTHICYEAKFSIYVDSKSELVTWTLFHRAN) are Lumenal-facing. Residues 59-79 (ISTGLSLTTIIIGCFLFYCIH) form a helical membrane-spanning segment. Over 80 to 85 (KNIYMG) the chain is Cytoplasmic. Residues 86 to 106 (LLIYAMWIITYELINFSIVLL) traverse the membrane as a helical segment. Residues 107–120 (LNGIIKDHFKTLSY) are Lumenal-facing. The helical transmembrane segment at 121 to 141 (LHWIFQISHMLLHFFCLPFIV) threads the bilayer. At 142-170 (KHAYNLYKESQTVGRKRRHRLCSTIAVNS) the chain is on the cytoplasmic side.

It is found in the membrane. The sequence is that of Transmembrane protein 217B from Homo sapiens (Human).